The chain runs to 170 residues: Photosystem II extrinsic protein V (170 aa).

The first 33 residues, 1 to 33 (MVSVFSSLRQSFKGLLVLVPVLIGLAFISPAEA), serve as a signal peptide directing secretion. 4 residues coordinate heme c: Cys-70, Cys-73, His-74, and Met-137.

It belongs to the cytochrome c family. PsbV subfamily. As to quaternary structure, PSII is composed of 1 copy each of membrane proteins PsbA, PsbB, PsbC, PsbD, PsbE, PsbF, PsbH, PsbI, PsbJ, PsbK, PsbL, PsbM, PsbT, PsbX, PsbY, PsbZ, Psb30/Ycf12, peripheral proteins PsbO, CyanoQ (PsbQ), PsbU, PsbV and a large number of cofactors. It forms dimeric complexes. Requires heme c as cofactor.

Its subcellular location is the cellular thylakoid membrane. In terms of biological role, one of the extrinsic, lumenal subunits of photosystem II (PSII). PSII is a light-driven water plastoquinone oxidoreductase, using light energy to abstract electrons from H(2)O, generating a proton gradient subsequently used for ATP formation. The extrinsic proteins stabilize the structure of photosystem II oxygen-evolving complex (OEC), the ion environment of oxygen evolution and protect the OEC against heat-induced inactivation. Low-potential cytochrome c that plays a role in the OEC of PSII. The sequence is that of Photosystem II extrinsic protein V from Synechococcus sp. (strain CC9902).